Consider the following 298-residue polypeptide: Protease HtpX homolog (298 aa).

The next 2 helical transmembrane spans lie at 14 to 34 (ILVMFGFFVLLALIGAAIGYL) and 39 to 59 (VIGGMIIAAIIAVIYMSVIIG). H144 provides a ligand contact to Zn(2+). The active site involves E145. H148 is a binding site for Zn(2+). Helical transmembrane passes span 159 to 179 (IALALASAIAMLVNFAGNFWW) and 195 to 215 (IFAILGSILLIILAPLAATIA). E224 serves as a coordination point for Zn(2+).

The protein belongs to the peptidase M48B family. Zn(2+) serves as cofactor.

The protein resides in the cell membrane. The sequence is that of Protease HtpX homolog from Limosilactobacillus reuteri (strain DSM 20016) (Lactobacillus reuteri).